The primary structure comprises 88 residues: Large ribosomal subunit protein eL37 (88 aa).

The Zn(2+) site is built by cysteine 19, cysteine 22, cysteine 34, and cysteine 37. A C4-type zinc finger spans residues 19–37 (CNRCGKRSFHVQKKTCASC).

It belongs to the eukaryotic ribosomal protein eL37 family. It depends on Zn(2+) as a cofactor.

Its function is as follows. Binds to the 23S rRNA. In Debaryomyces hansenii (strain ATCC 36239 / CBS 767 / BCRC 21394 / JCM 1990 / NBRC 0083 / IGC 2968) (Yeast), this protein is Large ribosomal subunit protein eL37 (RPL37).